A 210-amino-acid chain; its full sequence is Probable septum site-determining protein MinC (210 aa).

This sequence belongs to the MinC family. Interacts with MinD and FtsZ.

Cell division inhibitor that blocks the formation of polar Z ring septums. Rapidly oscillates between the poles of the cell to destabilize FtsZ filaments that have formed before they mature into polar Z rings. Prevents FtsZ polymerization. This Thermotoga petrophila (strain ATCC BAA-488 / DSM 13995 / JCM 10881 / RKU-1) protein is Probable septum site-determining protein MinC.